The chain runs to 345 residues: Dimethyladenosine transferase 1, mitochondrial (345 aa).

Residues 1 to 27 (MAAPGKLSTCRLPPLPTIREIIKLFRL) constitute a mitochondrion transit peptide. S-adenosyl-L-methionine is bound by residues L38, G63, E85, K86, D111, V112, and N141.

The protein belongs to the class I-like SAM-binding methyltransferase superfamily. rRNA adenine N(6)-methyltransferase family. KsgA subfamily. As to quaternary structure, interacts with mitochondrial RNA polymerase POLRMT. Interacts with TFAM. Bound to the maturing mtSSU until the late stages of assembly.

It is found in the mitochondrion. It carries out the reaction adenosine(N)/adenosine(N+1) in rRNA + 4 S-adenosyl-L-methionine = N(6)-dimethyladenosine(N)/N(6)-dimethyladenosine(N+1) in rRNA + 4 S-adenosyl-L-homocysteine + 4 H(+). Functionally, mitochondrial methyltransferase which uses S-adenosyl methionine to dimethylate two highly conserved adjacent adenosine residues (A1583 and A1584) within the loop of helix 45 at the 3-prime end of 12S rRNA, thereby regulating the assembly or stability of the small subunit of the mitochondrial ribosome. Also required for basal transcription of mitochondrial DNA, probably via its interaction with POLRMT and TFAM. Stimulates transcription independently of the methyltransferase activity. This is Dimethyladenosine transferase 1, mitochondrial (TFB1M) from Macaca fascicularis (Crab-eating macaque).